Here is a 150-residue protein sequence, read N- to C-terminus: Putative pre-16S rRNA nuclease (150 aa).

This sequence belongs to the YqgF nuclease family.

It is found in the cytoplasm. Could be a nuclease involved in processing of the 5'-end of pre-16S rRNA. The sequence is that of Putative pre-16S rRNA nuclease from Chlamydia felis (strain Fe/C-56) (Chlamydophila felis).